Reading from the N-terminus, the 163-residue chain is Protein EARLY RESPONSIVE TO DEHYDRATION 15 (163 aa).

Residues 10–20 (TLNPDAPLFIP) carry the PAM2-like motif. Residues 118–163 (NGEMVKKSSGNRSPRSIVEPAKYAEKPAKWGNQRVAAAPRNIHQPR) form a disordered region.

As to quaternary structure, interacts with PAB2, PAB4 and PAB8. Interacts with MPC. As to expression, expressed in cauline leaves, stems, rosette leaves, immature siliques and primary inflorescences.

The protein resides in the cytoplasm. In terms of biological role, central component of stress responses that interacts with poly(A)-binding proteins. Negative regulator of abscisic acid (ABA) responses, including resistance to drought and freezing as well as stomatal closure regulation. Mediates resistance to the bacterial necrotroph pathogen Erwinia carotovora subsp. carotovora and promotes the induction of marker genes for systemic acquired resistance (SAR). This Arabidopsis thaliana (Mouse-ear cress) protein is Protein EARLY RESPONSIVE TO DEHYDRATION 15 (ERD15).